The primary structure comprises 217 residues: MRLVLVGPPGAGKGTQAQLIASHLHVPKISTGDIFRKNVADDTPLGRLAKQYMDAGDLVPDEVTIAMVRDRLAGDDVRDGFLLDGFPRTVHQAVELDAMLAEAGARLDVVLELVVDDDEVIRRLSGRRTCADCAHVWHVTYDPPTVDGVCDLCGGKLFQREDDREETVRHRLEVYYQQTAPLIDYYAARGILEGIDAMGPVEEVTARAVAALRHWSR.

10-15 (GAGKGT) serves as a coordination point for ATP. The NMP stretch occupies residues 30-59 (STGDIFRKNVADDTPLGRLAKQYMDAGDLV). Residues Thr-31, Arg-36, 57–59 (DLV), 85–88 (GFPR), and Gln-92 each bind AMP. Residues 126–163 (GRRTCADCAHVWHVTYDPPTVDGVCDLCGGKLFQREDD) form an LID region. Arg-127 contacts ATP. 4 residues coordinate Zn(2+): Cys-130, Cys-133, Cys-150, and Cys-153. Arg-160 and Arg-171 together coordinate AMP. Residue Gly-199 participates in ATP binding.

It belongs to the adenylate kinase family. As to quaternary structure, monomer.

The protein localises to the cytoplasm. It catalyses the reaction AMP + ATP = 2 ADP. The protein operates within purine metabolism; AMP biosynthesis via salvage pathway; AMP from ADP: step 1/1. Functionally, catalyzes the reversible transfer of the terminal phosphate group between ATP and AMP. Plays an important role in cellular energy homeostasis and in adenine nucleotide metabolism. In Acidothermus cellulolyticus (strain ATCC 43068 / DSM 8971 / 11B), this protein is Adenylate kinase.